Here is an 82-residue protein sequence, read N- to C-terminus: MNALVGCTTSFDPGWEVDAFGAVSNLCQPMEADLYGCADPCWWPAQVADTLNTYPNWSAGADDVMQDWRKLQSVFPETKGSS.

Positions 7 to 16 form a cross-link, 4-cysteinyl-glutamic acid (Cys-Glu); sequence CTTSFDPGWE. 2 cross-links (3-cysteinyl-aspartic acid (Cys-Asp)) span residues 27–33 and 41–49; these read CQPMEAD and CWWPAQVAD. D33 (proton acceptor) is an active-site residue. The 4'-cysteinyl-tryptophylquinone (Cys-Trp) cross-link spans 37-43; sequence CADPCWW. Tryptophylquinone is present on W43.

Belongs to the quinohemoprotein amine dehydrogenase subunit gamma family. As to quaternary structure, heterotrimer of an alpha, a beta and a gamma subunit. The cofactor is cysteine tryptophylquinone residue. Post-translationally, the cysteine tryptophylquinone (CTQ) is generated by oxidation of the indole ring of a tryptophan residue to form tryptophylquinone, followed by covalent cross-linking with a cysteine residue.

The protein resides in the periplasm. It carries out the reaction 2 Fe(III)-[cytochrome c550] + an aliphatic amine + H2O = 2 Fe(II)-[cytochrome c550] + an aldehyde + NH4(+) + 2 H(+). With respect to regulation, inhibited by carbonyl reagents such as hydrazine, hydroxylamine, phenylhydrazine and semicarbazide. In terms of biological role, catalyzes the oxidative deamination of a wide range of primary aliphatic and aromatic amines. The physiological electron acceptor is the constitutive cytochrome c550. This Paracoccus denitrificans protein is Quinohemoprotein amine dehydrogenase subunit gamma (qhnDH).